Reading from the N-terminus, the 930-residue chain is Protein translocase subunit SecA (930 aa).

Residues Gln-87, 105-109, and Asp-515 contribute to the ATP site; that span reads GEGKT. Cys-914, Cys-916, Cys-925, and His-926 together coordinate Zn(2+).

Belongs to the SecA family. Monomer and homodimer. Part of the essential Sec protein translocation apparatus which comprises SecA, SecYEG and auxiliary proteins SecDF-YajC and YidC. The cofactor is Zn(2+).

The protein resides in the cell inner membrane. It is found in the cytoplasm. It carries out the reaction ATP + H2O + cellular proteinSide 1 = ADP + phosphate + cellular proteinSide 2.. Functionally, part of the Sec protein translocase complex. Interacts with the SecYEG preprotein conducting channel. Has a central role in coupling the hydrolysis of ATP to the transfer of proteins into and across the cell membrane, serving both as a receptor for the preprotein-SecB complex and as an ATP-driven molecular motor driving the stepwise translocation of polypeptide chains across the membrane. This is Protein translocase subunit SecA from Burkholderia thailandensis (strain ATCC 700388 / DSM 13276 / CCUG 48851 / CIP 106301 / E264).